The sequence spans 419 residues: UDP-N-acetylglucosamine 1-carboxyvinyltransferase (419 aa).

22–23 (KN) is a binding site for phosphoenolpyruvate. Residue R92 coordinates UDP-N-acetyl-alpha-D-glucosamine. The Proton donor role is filled by C116. C116 bears the 2-(S-cysteinyl)pyruvic acid O-phosphothioketal mark. UDP-N-acetyl-alpha-D-glucosamine contacts are provided by D306 and I328.

This sequence belongs to the EPSP synthase family. MurA subfamily.

Its subcellular location is the cytoplasm. The enzyme catalyses phosphoenolpyruvate + UDP-N-acetyl-alpha-D-glucosamine = UDP-N-acetyl-3-O-(1-carboxyvinyl)-alpha-D-glucosamine + phosphate. The protein operates within cell wall biogenesis; peptidoglycan biosynthesis. Functionally, cell wall formation. Adds enolpyruvyl to UDP-N-acetylglucosamine. This is UDP-N-acetylglucosamine 1-carboxyvinyltransferase from Pseudoalteromonas translucida (strain TAC 125).